The following is a 600-amino-acid chain: Terpenoid synthase 8 (600 aa).

Residues Asp-352, Asp-356, Asn-497, and Asp-505 each contribute to the Mg(2+) site. Residues Asp-352–Asp-356 carry the DDXXD motif motif.

It belongs to the terpene synthase family. Tpsa subfamily. The cofactor is Mg(2+). Requires Mn(2+) as cofactor. As to expression, stele, and tips of primary and secondary root.

Its subcellular location is the plastid. The catalysed reaction is (2E,6E,10E)-geranylgeranyl diphosphate = rhizathalene A + diphosphate. It participates in secondary metabolite biosynthesis; terpenoid biosynthesis. Catalyzes the synthesis of the semivolatile diterpene rhizatalene A. The chain is Terpenoid synthase 8 (TPS08) from Arabidopsis thaliana (Mouse-ear cress).